We begin with the raw amino-acid sequence, 314 residues long: Putative S-adenosyl-L-methionine-dependent methyltransferase MAV_4441 (314 aa).

S-adenosyl-L-methionine contacts are provided by residues aspartate 138 and 167–168 (DL).

Belongs to the UPF0677 family.

Functionally, exhibits S-adenosyl-L-methionine-dependent methyltransferase activity. This chain is Putative S-adenosyl-L-methionine-dependent methyltransferase MAV_4441, found in Mycobacterium avium (strain 104).